We begin with the raw amino-acid sequence, 420 residues long: LanC-like protein 3 (420 aa).

This sequence belongs to the LanC-like protein family.

This is LanC-like protein 3 (Lancl3) from Mus musculus (Mouse).